The primary structure comprises 236 residues: Alpha-tubulin N-acetyltransferase (236 aa).

The N-acetyltransferase domain maps to 21–201 (ASVPDGVSRW…NKFVVFHGFF (181 aa)). Residues 134–147 (FYVD…GYGK) and 171–180 (SDKLLGFMKK) each bind acetyl-CoA. A disordered region spans residues 217-236 (SPTGAAAAATGTKAKNEMPG). The span at 219–229 (TGAAAAATGTK) shows a compositional bias: low complexity.

It belongs to the acetyltransferase ATAT1 family.

The enzyme catalyses L-lysyl-[alpha-tubulin] + acetyl-CoA = N(6)-acetyl-L-lysyl-[alpha-tubulin] + CoA + H(+). Specifically acetylates 'Lys-40' in alpha-tubulin on the lumenal side of microtubules. Promotes microtubule destabilization and accelerates microtubule dynamics; this activity may be independent of acetylation activity. Acetylates alpha-tubulin with a slow enzymatic rate, due to a catalytic site that is not optimized for acetyl transfer. Enters the microtubule through each end and diffuses quickly throughout the lumen of microtubules. Acetylates only long/old microtubules because of its slow acetylation rate since it does not have time to act on dynamically unstable microtubules before the enzyme is released. The sequence is that of Alpha-tubulin N-acetyltransferase from Leishmania braziliensis.